Here is a 344-residue protein sequence, read N- to C-terminus: Flavonoid 7-O-methyltransferase 1B (344 aa).

Aspartate 211 contributes to the S-adenosyl-L-methionine binding site. Histidine 249 serves as the catalytic Proton acceptor.

Belongs to the class I-like SAM-binding methyltransferase superfamily. Cation-independent O-methyltransferase family. Homodimer.

The catalysed reaction is scutellarein + S-adenosyl-L-methionine = scutellarein 7-methyl ether + S-adenosyl-L-homocysteine. The enzyme catalyses 4',7,8-trihydroxyflavone + S-adenosyl-L-methionine = 4',8-dihydroxy-7-methoxyflavone + S-adenosyl-L-homocysteine. It carries out the reaction isorhamnetin + S-adenosyl-L-methionine = rhamnacene + S-adenosyl-L-homocysteine + H(+). It catalyses the reaction kaempferol + S-adenosyl-L-methionine = kaempferol 7-methyl ether + S-adenosyl-L-homocysteine + H(+). The catalysed reaction is (2S)-naringenin + S-adenosyl-L-methionine = (2S)-sakuranetin + S-adenosyl-L-homocysteine + H(+). The enzyme catalyses quercetin + S-adenosyl-L-methionine = rhamnetin + S-adenosyl-L-homocysteine + H(+). It carries out the reaction apigenin + S-adenosyl-L-methionine = genkwanin + S-adenosyl-L-homocysteine + H(+). It catalyses the reaction luteolin + S-adenosyl-L-methionine = luteolin 7-methyl ether + S-adenosyl-L-homocysteine + H(+). The protein operates within flavonoid metabolism. Functionally, flavonoid 7-O-methyltransferase involved in the biosynthesis of polymethoxylated flavonoids natural products such as pebrellin, aroma compounds which contribute to the flavor of peppermint, and exhibit pharmacological activities such as anti-allergic, anti-oxidant, antibacterial, anti-proliferative, and anti-inflammatory effects. Catalyzes S-adenosylmethionine-dependent regioselective 7-O-methylation of flavonoids; active on various hydroxylated flavonoid substrates, including luteolin (LUT), quercetin, kaempferol, isorhamnetin, apigenin (API), scutellarein (6-hydroxy-apigenin, 6-OH-API, SCU), 7,8,4'-trihydroxy-flavone and naringenin (NAR), and, with a lower efficiency, 7,8,3',4'-tetrahydroxy-flavone, taxifolin and hesperetin. The protein is Flavonoid 7-O-methyltransferase 1B of Mentha piperita (Peppermint).